We begin with the raw amino-acid sequence, 863 residues long: Leucine--tRNA ligase (863 aa).

Positions 40–51 (PYPSGAGLHVGH) match the 'HIGH' region motif. The 'KMSKS' region signature appears at 635 to 639 (KMSKS). Lys638 contributes to the ATP binding site.

Belongs to the class-I aminoacyl-tRNA synthetase family.

It is found in the cytoplasm. It carries out the reaction tRNA(Leu) + L-leucine + ATP = L-leucyl-tRNA(Leu) + AMP + diphosphate. This chain is Leucine--tRNA ligase, found in Leptospira interrogans serogroup Icterohaemorrhagiae serovar copenhageni (strain Fiocruz L1-130).